Consider the following 358-residue polypeptide: Aromatic amino acid aminotransferase (358 aa).

Lys-219 bears the N6-(pyridoxal phosphate)lysine mark.

Belongs to the class-II pyridoxal-phosphate-dependent aminotransferase family. Homodimer. The cofactor is pyridoxal 5'-phosphate.

The enzyme catalyses an aromatic L-alpha-amino acid + 2-oxoglutarate = an aromatic oxo-acid + L-glutamate. Its function is as follows. Aminotransferase that catalyzes the conversion of aromatic amino acids and 2-oxoglutarate into corresponding aromatic oxo acids and L-glutamate. This chain is Aromatic amino acid aminotransferase, found in Nocardia farcinica (strain IFM 10152).